A 1158-amino-acid chain; its full sequence is ATP-dependent helicase/deoxyribonuclease subunit B (1158 aa).

An ATP-binding site is contributed by 8 to 15 (GRAGTGKS). Residues C791, C1112, C1115, and C1121 each contribute to the [4Fe-4S] cluster site.

This sequence belongs to the helicase family. AddB/RexB type 1 subfamily. Heterodimer of AddA and AddB. Mg(2+) is required as a cofactor. [4Fe-4S] cluster serves as cofactor.

The heterodimer acts as both an ATP-dependent DNA helicase and an ATP-dependent, dual-direction single-stranded exonuclease. Recognizes the chi site generating a DNA molecule suitable for the initiation of homologous recombination. The AddB subunit has 5' -&gt; 3' nuclease activity but not helicase activity. In Clostridium perfringens (strain 13 / Type A), this protein is ATP-dependent helicase/deoxyribonuclease subunit B.